Here is a 614-residue protein sequence, read N- to C-terminus: MKLSWSLFCGLASLALSQFDEAPPSQSDYFVRHIPGLDSVDNYTMHSGNILTDAAHNGNLFFWLVEAQYKITERPKTIVWFNGGPGCSSMDGALLEVGPFRIVDDKLRVDPNKGSWHKYANVLFVDQPYGTGYSYSDTDSYLTGLGQVGDEMDSFMTQFLKLFPERAHDDFYLAGESYAGQYIPYIATKLQQTRTVDLKGLLIGNGWMDPANQYYQYVPYALDYGVIEKTEEHVKDLKELTDTCERAINIAKDKNNGRLPVHIRACEDIMNGIVELSRNERSAPESEGICVNYYDVSKEDKWPSCGMNWPEILPYVTDWLRQDATVQALNVNNDKQESWQECNGAVGSRMRQGNDDAAVYLLPDLLESMEILFFNGDRDLICNHYGNERMIEQLEWNGKKGWTEGLELDDWVVDGVSKGKKQSDRNLTYVRIYNASHMVPYDEPEACLTMLNDFIGVSKALSDLSGNKPGRGSENPSDLDDQKSGDQKSDDDSSSDDDDDAEHDKKIASDAMWKAYYQAGFTALIVVLIILGLAGFLFWRKNRGHIYQEETSLLGSCFGGISRWRNSSGGPLSNQQGTFDSRQRLMEPGEYYDLGEIAEEDEDAEELVIRRPEV.

Positions 1 to 17 (MKLSWSLFCGLASLALS) are cleaved as a signal peptide. Topologically, residues 18–518 (QFDEAPPSQS…SDAMWKAYYQ (501 aa)) are lumenal. Asn-42 carries an N-linked (GlcNAc...) asparagine glycan. Catalysis depends on residues Ser-177 and Asp-379. N-linked (GlcNAc...) asparagine glycans are attached at residues Asn-426 and Asn-434. His-437 is an active-site residue. The tract at residues 465-503 (SGNKPGRGSENPSDLDDQKSGDQKSDDDSSSDDDDDAEH) is disordered. The segment covering 480 to 491 (DDQKSGDQKSDD) has biased composition (basic and acidic residues). The span at 492–501 (DSSSDDDDDA) shows a compositional bias: acidic residues. The chain crosses the membrane as a helical span at residues 519-539 (AGFTALIVVLIILGLAGFLFW). Residues 540-614 (RKNRGHIYQE…EELVIRRPEV (75 aa)) lie on the Cytoplasmic side of the membrane.

It belongs to the peptidase S10 family.

Its subcellular location is the golgi apparatus. It localises to the trans-Golgi network membrane. The catalysed reaction is Preferential release of a C-terminal arginine or lysine residue.. Protease with a carboxypeptidase B-like function involved in the C-terminal processing of the lysine and arginine residues from protein precursors. Promotes cell fusion and is involved in the programmed cell death. This chain is Pheromone-processing carboxypeptidase KEX1 (KEX1), found in Yarrowia lipolytica (strain CLIB 122 / E 150) (Yeast).